Reading from the N-terminus, the 410-residue chain is Arginine deiminase (410 aa).

The active-site Amidino-cysteine intermediate is C400.

This sequence belongs to the arginine deiminase family.

The protein localises to the cytoplasm. The catalysed reaction is L-arginine + H2O = L-citrulline + NH4(+). It functions in the pathway amino-acid degradation; L-arginine degradation via ADI pathway; carbamoyl phosphate from L-arginine: step 1/2. The protein is Arginine deiminase of Bacillus cereus (strain ATCC 10987 / NRS 248).